The sequence spans 267 residues: MRILVEIAYQGNNFLGFQIQQNGRTVQQQFEKLLQRMHKRHVRIHPSSRTDRGVHAIQQYFHFDTELNIPMSQWQYAMNRTLPDDIYVNNVVTVDDDFHCRYDCVGKRYRYKVYQAQHRDPFQSGLKTFIPETLDLDKMNRAAQQFIGTHDFTGFCSQKTEVESKVRTLYQSEIVKTDDGFDYIVTGSGFLYNMVRVLVAFLIEVGKGRHEISDVPKLLESKNRKNVPFTAPAEGLYLEKIYLDENELLKDFGNDIKIHRKKSLQND.

The active-site Nucleophile is D51. Y109 provides a ligand contact to substrate.

Belongs to the tRNA pseudouridine synthase TruA family. As to quaternary structure, homodimer.

The catalysed reaction is uridine(38/39/40) in tRNA = pseudouridine(38/39/40) in tRNA. Its function is as follows. Formation of pseudouridine at positions 38, 39 and 40 in the anticodon stem and loop of transfer RNAs. The sequence is that of tRNA pseudouridine synthase A from Staphylococcus aureus (strain Mu3 / ATCC 700698).